The following is a 32-amino-acid chain: Cytochrome b6-f complex subunit 7 (32 aa).

A helical transmembrane segment spans residues Ile-5–Leu-25.

Belongs to the PetM family. As to quaternary structure, the 4 large subunits of the cytochrome b6-f complex are cytochrome b6, subunit IV (17 kDa polypeptide, PetD), cytochrome f and the Rieske protein, while the 4 small subunits are PetG, PetL, PetM and PetN. The complex functions as a dimer.

The protein localises to the cellular thylakoid membrane. Functionally, component of the cytochrome b6-f complex, which mediates electron transfer between photosystem II (PSII) and photosystem I (PSI), cyclic electron flow around PSI, and state transitions. The chain is Cytochrome b6-f complex subunit 7 from Prochlorococcus marinus (strain SARG / CCMP1375 / SS120).